Here is a 675-residue protein sequence, read N- to C-terminus: UvrABC system protein B (675 aa).

The Helicase ATP-binding domain maps to 35–192 (QGMRDGLMYQ…ARLVAMQYTR (158 aa)). 48–55 (GVTGSGKT) is an ATP binding site. The Beta-hairpin motif lies at 101-124 (YYDYYQPEAYVPTRDLFIEKDSSI). Residues 439-605 (QVDDLLGEIK…GVNKAVRELI (167 aa)) form the Helicase C-terminal domain. The region spanning 633-668 (AREIRRLEKLMTDHARNLEFEQAAAARDALNALKQR) is the UVR domain.

This sequence belongs to the UvrB family. In terms of assembly, forms a heterotetramer with UvrA during the search for lesions. Interacts with UvrC in an incision complex.

It localises to the cytoplasm. The UvrABC repair system catalyzes the recognition and processing of DNA lesions. A damage recognition complex composed of 2 UvrA and 2 UvrB subunits scans DNA for abnormalities. Upon binding of the UvrA(2)B(2) complex to a putative damaged site, the DNA wraps around one UvrB monomer. DNA wrap is dependent on ATP binding by UvrB and probably causes local melting of the DNA helix, facilitating insertion of UvrB beta-hairpin between the DNA strands. Then UvrB probes one DNA strand for the presence of a lesion. If a lesion is found the UvrA subunits dissociate and the UvrB-DNA preincision complex is formed. This complex is subsequently bound by UvrC and the second UvrB is released. If no lesion is found, the DNA wraps around the other UvrB subunit that will check the other stand for damage. The sequence is that of UvrABC system protein B from Bordetella petrii (strain ATCC BAA-461 / DSM 12804 / CCUG 43448).